Consider the following 260-residue polypeptide: Sperm microtubule inner protein 6 (260 aa).

The protein belongs to the SPMIP6 family. In terms of assembly, microtubule inner protein component of sperm flagellar doublet microtubules. Interacts with alpha-tubulin. As to expression, testis-specific, expressed exclusively in germ cells (at protein level). In terms of tissue distribution, testis-specific. Expressed in both lung and testis.

The protein localises to the cytoplasm. The protein resides in the cytoskeleton. It localises to the nucleus. Its subcellular location is the mitochondrion. It is found in the flagellum axoneme. Functionally, may participate in intramanchette transport and midpiece formation of the sperm tail. May play a potential role in somatic cell proliferation. The sequence is that of Sperm microtubule inner protein 6 (SPMIP6) from Mus musculus (Mouse).